A 194-amino-acid polypeptide reads, in one-letter code: Mpv17-like protein (194 aa).

The Cytoplasmic segment spans residues M1 to R14. Residues Y15 to L34 traverse the membrane as a helical segment. The segment at P16–A55 is targeting to peroxisomes. Residues Q35 to R50 lie on the Lumenal side of the membrane. Residues V51–L67 form a helical membrane-spanning segment. The Cytoplasmic segment spans residues R68 to T91. A helical transmembrane segment spans residues V92–G110. Topologically, residues K111 to T150 are lumenal. A helical membrane pass occupies residues A151–Q168. Residues Q169–K194 are Cytoplasmic-facing.

The protein belongs to the peroxisomal membrane protein PXMP2/4 family. Isoform 1 and isoform 3 are expressed in the kidney (at protein level). Isoform 1 is expressed in the kidney, spleen, heart, brain, lung and liver. Isoform 3 is expressed in the kidney. Isoform 1 and isoform 3 expression increase during development, reache their highest level in adulthood and decrease with aging.

It is found in the peroxisome membrane. The protein resides in the cytoplasm. Its function is as follows. Participates in reactive oxygen species metabolism by up- or down-regulation of the genes of antioxidant enzymes. Protective against the mitochondrial apoptotic cascade. Participates in reactive oxygen species metabolism by up- or down-regulation of the genes of antioxidant enzymes. The chain is Mpv17-like protein (Mpv17l) from Mus musculus (Mouse).